A 284-amino-acid chain; its full sequence is TnP I resolvase (284 aa).

The 84-residue stretch at 1–84 (MDVAKQFSSY…SLAKFNEFLI (84 aa)) folds into the Core-binding (CB) domain. The 176-residue stretch at 107–282 (ASPTQIVELD…NQLQLKNKME (176 aa)) folds into the Tyr recombinase domain. Active-site residues include arginine 145, lysine 170, histidine 234, arginine 237, and histidine 260. Tyrosine 269 (O-(3'-phospho-DNA)-tyrosine intermediate) is an active-site residue.

Belongs to the 'phage' integrase family.

Its function is as follows. Resolvase catalyzes the resolution (a site-specific recombination) of the cointegrated replicon to yield the final transposition products. The chain is TnP I resolvase (tnpI) from Bacillus thuringiensis.